A 120-amino-acid polypeptide reads, in one-letter code: Prefoldin subunit beta (120 aa).

The protein belongs to the prefoldin subunit beta family. In terms of assembly, heterohexamer of two alpha and four beta subunits.

It is found in the cytoplasm. Its function is as follows. Molecular chaperone capable of stabilizing a range of proteins. Seems to fulfill an ATP-independent, HSP70-like function in archaeal de novo protein folding. The chain is Prefoldin subunit beta from Methanospirillum hungatei JF-1 (strain ATCC 27890 / DSM 864 / NBRC 100397 / JF-1).